A 335-amino-acid polypeptide reads, in one-letter code: Glyceraldehyde-3-phosphate dehydrogenase 1 (335 aa).

NAD(+)-binding positions include 12 to 13, Asp34, Arg78, and Ser120; that span reads RI. Residues 151–153 and Thr182 each bind D-glyceraldehyde 3-phosphate; that span reads SCT. Cys152 (nucleophile) is an active-site residue. Residue Asn183 participates in NAD(+) binding. Residues Arg197, 210-211, and Arg233 each bind D-glyceraldehyde 3-phosphate; that span reads TG. Asn315 serves as a coordination point for NAD(+).

Belongs to the glyceraldehyde-3-phosphate dehydrogenase family. As to quaternary structure, homotetramer. Interacts with BrxC. In terms of processing, in response to oxidative stress, the active site Cys likely reacts with bacillithiol (BSH) to form mixed disulfides to protect the Cys residue against overoxidation. S-bacillithiolation presumably leads to loss of catalytic activity. Debacillithiolation by monothiol bacilliredoxin BrxC restores the activity.

It localises to the cytoplasm. The catalysed reaction is D-glyceraldehyde 3-phosphate + phosphate + NAD(+) = (2R)-3-phospho-glyceroyl phosphate + NADH + H(+). It functions in the pathway carbohydrate degradation; glycolysis; pyruvate from D-glyceraldehyde 3-phosphate: step 1/5. Its function is as follows. Involved in the glycolysis. Catalyzes the oxidative phosphorylation of glyceraldehyde 3-phosphate (G3P) to 1,3-bisphosphoglycerate (BPG) using the cofactor NAD. The first reaction step involves the formation of a hemiacetal intermediate between G3P and a cysteine residue, and this hemiacetal intermediate is then oxidized to a thioester, with concomitant reduction of NAD to NADH. The reduced NADH is then exchanged with the second NAD, and the thioester is attacked by a nucleophilic inorganic phosphate to produce BPG. The chain is Glyceraldehyde-3-phosphate dehydrogenase 1 from Bacillus subtilis (strain 168).